Consider the following 195-residue polypeptide: Proline-rich protein 3 (195 aa).

Positions 1–29 are cleaved as a signal peptide; that stretch reads MKMNFFNSFPQYGVYILGLNLLLCGVSEG.

Component of the acid-insoluble organic matrix of calcified layers of the shell (at protein level).

It localises to the secreted. The protein is Proline-rich protein 3 of Lottia gigantea (Giant owl limpet).